A 1587-amino-acid polypeptide reads, in one-letter code: Pentafunctional AROM polypeptide (1587 aa).

The interval 1 to 384 (MIEPTKISIL…YEPRASVVAN (384 aa)) is 3-dehydroquinate synthase. NAD(+) contacts are provided by residues 44–46 (DTN), 81–84 (EVSK), 114–116 (GGV), and aspartate 119. Arginine 130 serves as a coordination point for 7-phospho-2-dehydro-3-deoxy-D-arabino-heptonate. Position 139–140 (139–140 (TT)) interacts with NAD(+). Positions 146 and 152 each coordinate 7-phospho-2-dehydro-3-deoxy-D-arabino-heptonate. Residue lysine 161 coordinates NAD(+). Asparagine 162 contributes to the 7-phospho-2-dehydro-3-deoxy-D-arabino-heptonate binding site. NAD(+) contacts are provided by residues 179–182 (FLET) and asparagine 190. Residue glutamate 194 coordinates Zn(2+). 7-phospho-2-dehydro-3-deoxy-D-arabino-heptonate-binding positions include 194–197 (EVIK) and lysine 250. The Proton acceptor; for 3-dehydroquinate synthase activity role is filled by glutamate 260. Residues 264 to 268 (RNLLN) and histidine 271 contribute to the 7-phospho-2-dehydro-3-deoxy-D-arabino-heptonate site. Residue histidine 271 participates in Zn(2+) binding. Histidine 275 serves as the catalytic Proton acceptor; for 3-dehydroquinate synthase activity. Histidine 287 and lysine 356 together coordinate 7-phospho-2-dehydro-3-deoxy-D-arabino-heptonate. Histidine 287 provides a ligand contact to Zn(2+). Residues 397–842 (VFPGVSPKST…WDTLRLKFAV (446 aa)) are EPSP synthase. Cysteine 824 functions as the For EPSP synthase activity in the catalytic mechanism. Positions 864–1055 (SASVFIIGMR…KKKQHSFFVS (192 aa)) are shikimate kinase. 871–878 (GMRGAGKT) provides a ligand contact to ATP. A 3-dehydroquinase region spans residues 1056-1276 (LTLPDLRPAG…AAPGQLSATE (221 aa)). The active-site Proton acceptor; for 3-dehydroquinate dehydratase activity is histidine 1179. Lysine 1207 (schiff-base intermediate with substrate; for 3-dehydroquinate dehydratase activity) is an active-site residue. A shikimate dehydrogenase region spans residues 1289–1587 (KKRFALFGTP…RDAVLGTKAD (299 aa)).

The protein in the N-terminal section; belongs to the sugar phosphate cyclases superfamily. Dehydroquinate synthase family. This sequence in the 2nd section; belongs to the EPSP synthase family. It in the 3rd section; belongs to the shikimate kinase family. In the 4th section; belongs to the type-I 3-dehydroquinase family. The protein in the C-terminal section; belongs to the shikimate dehydrogenase family. In terms of assembly, homodimer. It depends on Zn(2+) as a cofactor.

It localises to the cytoplasm. The enzyme catalyses 7-phospho-2-dehydro-3-deoxy-D-arabino-heptonate = 3-dehydroquinate + phosphate. It carries out the reaction 3-dehydroquinate = 3-dehydroshikimate + H2O. The catalysed reaction is shikimate + NADP(+) = 3-dehydroshikimate + NADPH + H(+). It catalyses the reaction shikimate + ATP = 3-phosphoshikimate + ADP + H(+). The enzyme catalyses 3-phosphoshikimate + phosphoenolpyruvate = 5-O-(1-carboxyvinyl)-3-phosphoshikimate + phosphate. It functions in the pathway metabolic intermediate biosynthesis; chorismate biosynthesis; chorismate from D-erythrose 4-phosphate and phosphoenolpyruvate: step 2/7. Its pathway is metabolic intermediate biosynthesis; chorismate biosynthesis; chorismate from D-erythrose 4-phosphate and phosphoenolpyruvate: step 3/7. It participates in metabolic intermediate biosynthesis; chorismate biosynthesis; chorismate from D-erythrose 4-phosphate and phosphoenolpyruvate: step 4/7. The protein operates within metabolic intermediate biosynthesis; chorismate biosynthesis; chorismate from D-erythrose 4-phosphate and phosphoenolpyruvate: step 5/7. It functions in the pathway metabolic intermediate biosynthesis; chorismate biosynthesis; chorismate from D-erythrose 4-phosphate and phosphoenolpyruvate: step 6/7. The AROM polypeptide catalyzes 5 consecutive enzymatic reactions in prechorismate polyaromatic amino acid biosynthesis. This is Pentafunctional AROM polypeptide from Aspergillus clavatus (strain ATCC 1007 / CBS 513.65 / DSM 816 / NCTC 3887 / NRRL 1 / QM 1276 / 107).